The primary structure comprises 258 residues: Steroid 5-alpha-reductase DET2 (258 aa).

Transmembrane regions (helical) follow at residues 8–28, 49–69, 77–97, 109–129, 144–164, and 201–221; these read FHYCLLTLYIIALPTWISLYF, LAWFLMESPTLWLTFFLFPSG, SFLLISPFLFHYFNRTVLYPL, FPVSVAFMAFGFNLLNGYLQA, LFWWRFLAGLLIFVVGMWVNV, and IMEWFGWAVMTWSWVGFGFFL.

This sequence belongs to the steroid 5-alpha reductase family. As to expression, accumulates in fibers (seed trichomes) during both their initiation and elongation phases. Also present in roots, hypocotyls, leaves, flowers and ovules, and barely in cotyledons.

It localises to the membrane. It catalyses the reaction a 3-oxo-5alpha-steroid + NADP(+) = a 3-oxo-Delta(4)-steroid + NADPH + H(+). Its pathway is plant hormone biosynthesis; brassinosteroid biosynthesis. Its function is as follows. Involved in a reduction step in the biosynthesis of the plant steroid, brassinolide (BL). Promotes cotton fibers (seed trichomes) initiation and elongation. The polypeptide is Steroid 5-alpha-reductase DET2 (Gossypium hirsutum (Upland cotton)).